The primary structure comprises 127 residues: Peroxiredoxin-2 (127 aa).

Residues 1–125 (LFFYPLDFTF…ALRLVQGXQY (125 aa)) form the Thioredoxin domain. The Cysteine sulfenic acid (-SOH) intermediate role is filled by Cys-12. Position 73 is a phosphoserine (Ser-73).

Belongs to the peroxiredoxin family. AhpC/Prx1 subfamily. In terms of assembly, homodimer; disulfide-linked, upon oxidation. 5 homodimers assemble to form a ring-like decamer. Interacts with TIPIN. Post-translationally, the enzyme can be inactivated by further oxidation of the cysteine sulfenic acid (C(P)-SOH) to sulphinic acid (C(P)-SO2H) instead of its condensation to a disulfide bond. It can be reactivated by forming a transient disulfide bond with sulfiredoxin SRXN1, which reduces the cysteine sulfinic acid in an ATP- and Mg-dependent manner. In terms of processing, acetylation increases resistance to transition to high molecular-mass complexes. Deacetylated by HDAC6 which decreases reducing activity.

Its subcellular location is the cytoplasm. The catalysed reaction is a hydroperoxide + [thioredoxin]-dithiol = an alcohol + [thioredoxin]-disulfide + H2O. Functionally, thiol-specific peroxidase that catalyzes the reduction of hydrogen peroxide and organic hydroperoxides to water and alcohols, respectively. Plays a role in cell protection against oxidative stress by detoxifying peroxides and as sensor of hydrogen peroxide-mediated signaling events. Might participate in the signaling cascades of growth factors and tumor necrosis factor-alpha by regulating the intracellular concentrations of H(2)O(2). The polypeptide is Peroxiredoxin-2 (PRDX2) (Sus scrofa (Pig)).